The primary structure comprises 491 residues: MAHYINIYGKRLFDIGLYLKTSVDLILQQQHVLMSQQKFTDISLCHREAPNPKLDLPDDNRLSPLTELEDIGQQSKTLGTAIHRKISEQKRVIESGSVASIVEHKRTNLSAIMATRANIPEQVRGAPLVDGLKIQNKNGAVKNRRALGDIGNLVSVPGVQGGKAQPPINRPITLSFRAQLLANAQLERKPINGDNKVPALGPKSQPLAARNPEAQRAVQKKNLVVKQQTKPVEVIETKRNAQSKAACGIVNKPKILDIDESDKDNHVAAVEYVDDMYSFYKEVEKESQPKMYMHIQTEMNEKMRAILIDWLLEVHIKFELNLETLYLTVNIIDRFLYVKAVPKRELQVNDLVYVTDNAYSSRQILVMKKAILGNLEWYLTIPTQYVFLFCFIKASISDPEVLHVQKKNLQASKTKSFSIQVLSFSSHKSIVKSDQFCKKFNLCQEVTALASEFHLGNCEAWRETVTKLKDPETKCLKVVFEYTASDACGYG.

Positions 275-347 (DMYSFYKEVE…VKAVPKRELQ (73 aa)) constitute a Cyclin N-terminal domain.

Belongs to the cyclin family. Cyclin AB subfamily. In terms of tissue distribution, expressed in roots, stems and flowers.

The sequence is that of Cyclin-B1-5 (CYCB1-5) from Arabidopsis thaliana (Mouse-ear cress).